The chain runs to 170 residues: Cyclic pyranopterin monophosphate synthase (170 aa).

Substrate-binding positions include 89–91 (LCH) and 125–126 (ME). The active site involves D140.

This sequence belongs to the MoaC family. In terms of assembly, homohexamer; trimer of dimers.

It catalyses the reaction (8S)-3',8-cyclo-7,8-dihydroguanosine 5'-triphosphate = cyclic pyranopterin phosphate + diphosphate. It functions in the pathway cofactor biosynthesis; molybdopterin biosynthesis. Its function is as follows. Catalyzes the conversion of (8S)-3',8-cyclo-7,8-dihydroguanosine 5'-triphosphate to cyclic pyranopterin monophosphate (cPMP). This Streptomyces avermitilis (strain ATCC 31267 / DSM 46492 / JCM 5070 / NBRC 14893 / NCIMB 12804 / NRRL 8165 / MA-4680) protein is Cyclic pyranopterin monophosphate synthase.